The chain runs to 157 residues: Protein Smg (157 aa).

Belongs to the Smg family.

This Shigella boydii serotype 18 (strain CDC 3083-94 / BS512) protein is Protein Smg.